A 138-amino-acid polypeptide reads, in one-letter code: Large ribosomal subunit protein uL16 (138 aa).

The span at 1–16 (MLIPKRVKYRRQHRPT) shows a compositional bias: basic residues. The tract at residues 1–23 (MLIPKRVKYRRQHRPTRSGVSKG) is disordered.

This sequence belongs to the universal ribosomal protein uL16 family. Part of the 50S ribosomal subunit.

Functionally, binds 23S rRNA and is also seen to make contacts with the A and possibly P site tRNAs. This chain is Large ribosomal subunit protein uL16, found in Corynebacterium aurimucosum (strain ATCC 700975 / DSM 44827 / CIP 107346 / CN-1) (Corynebacterium nigricans).